The chain runs to 219 residues: ATP synthase F(0) complex subunit a (219 aa).

Helical transmembrane passes span 4–24 (PTYL…ILFP), 61–81 (WAAL…LGLL), 90–110 (QLSL…IIGM), 124–144 (EGTP…SLFI), 172–192 (FVLL…LFLL), and 194–214 (LLEI…LSLY).

The protein belongs to the ATPase A chain family. In terms of assembly, component of the ATP synthase complex composed at least of ATP5F1A/subunit alpha, ATP5F1B/subunit beta, ATP5MC1/subunit c (homooctomer), MT-ATP6/subunit a, MT-ATP8/subunit 8, ATP5ME/subunit e, ATP5MF/subunit f, ATP5MG/subunit g, ATP5MK/subunit k, ATP5MJ/subunit j, ATP5F1C/subunit gamma, ATP5F1D/subunit delta, ATP5F1E/subunit epsilon, ATP5PF/subunit F6, ATP5PB/subunit b, ATP5PD/subunit d, ATP5PO/subunit OSCP. ATP synthase complex consists of a soluble F(1) head domain (subunits alpha(3) and beta(3)) - the catalytic core - and a membrane F(0) domain - the membrane proton channel (subunits c, a, 8, e, f, g, k and j). These two domains are linked by a central stalk (subunits gamma, delta, and epsilon) rotating inside the F1 region and a stationary peripheral stalk (subunits F6, b, d, and OSCP). Interacts with DNAJC30; interaction is direct.

Its subcellular location is the mitochondrion inner membrane. The catalysed reaction is H(+)(in) = H(+)(out). Functionally, subunit a, of the mitochondrial membrane ATP synthase complex (F(1)F(0) ATP synthase or Complex V) that produces ATP from ADP in the presence of a proton gradient across the membrane which is generated by electron transport complexes of the respiratory chain. ATP synthase complex consist of a soluble F(1) head domain - the catalytic core - and a membrane F(1) domain - the membrane proton channel. These two domains are linked by a central stalk rotating inside the F(1) region and a stationary peripheral stalk. During catalysis, ATP synthesis in the catalytic domain of F(1) is coupled via a rotary mechanism of the central stalk subunits to proton translocation. With the subunit c (ATP5MC1), forms the proton-conducting channel in the F(0) domain, that contains two crucial half-channels (inlet and outlet) that facilitate proton movement from the mitochondrial intermembrane space (IMS) into the matrix. Protons are taken up via the inlet half-channel and released through the outlet half-channel, following a Grotthuss mechanism. The chain is ATP synthase F(0) complex subunit a from Oncorhynchus masou (Cherry salmon).